The following is a 40-amino-acid chain: Protein 4.1 (40 aa).

The sequence is that of Protein 4.1 from Escherichia phage T7 (Bacteriophage T7).